A 435-amino-acid polypeptide reads, in one-letter code: WD repeat domain phosphoinositide-interacting protein 2 (435 aa).

Residues 182–222 form a WD 1 repeat; the sequence is AHDSPLAALAFDASGTKLATASEKGTVIRVFSIPEGQKLFE. A L/FRRG motif motif is present at residues 223 to 226; it reads FRRG. 2 WD repeats span residues 228 to 267 and 311 to 349; these read KRCVSICSLAFSMDSIFLSASSNTETVHIFKLETIKEKPP and GHKNICALATIQKISRLLVGAADGYLYIYNFDPQEGGEC. The disordered stretch occupies residues 386–435; it reads VTKTYPPPSPTRHAYADDLGAVGGASEEDEMGNLRLDEDNENPPMILQTE.

Belongs to the WD repeat PROPPIN family.

The protein resides in the preautophagosomal structure membrane. In terms of biological role, component of the autophagy machinery that controls the major intracellular degradation process by which cytoplasmic materials are packaged into autophagosomes and delivered to lysosomes for degradation. Involved in an early step of the formation of preautophagosomal structures. In Xenopus laevis (African clawed frog), this protein is WD repeat domain phosphoinositide-interacting protein 2 (wipi2).